The chain runs to 132 residues: Protein NrdI (132 aa).

This sequence belongs to the NrdI family.

Functionally, probably involved in ribonucleotide reductase function. In Bartonella henselae (strain ATCC 49882 / DSM 28221 / CCUG 30454 / Houston 1) (Rochalimaea henselae), this protein is Protein NrdI.